Here is a 513-residue protein sequence, read N- to C-terminus: Zinc finger CCCH-type with G patch domain-containing protein (513 aa).

The C3H1-type zinc-finger motif lies at 155–178; sequence PCSYYLEGECRFDEAKCRFSHGAL. Acidic residues-rich tracts occupy residues 252-261 and 273-283; these read DQDEDDELSS and SDEAESDMDDL. Positions 252–283 are disordered; sequence DQDEDDELSSEESTSSMRDASSDEAESDMDDL. Positions 312–358 constitute a G-patch domain; that stretch reads TRGIGSKLMEKMGYIHGTGLGSDGRGIVTPVSAQILPQGRSLDACME. The span at 477–495 shows a compositional bias: polar residues; it reads QVQMQSHKQELATLQAQER. Positions 477 to 513 are disordered; the sequence is QVQMQSHKQELATLQAQERSLSKEQQTRKSKNKMFEF. The span at 496–513 shows a compositional bias: basic and acidic residues; that stretch reads SLSKEQQTRKSKNKMFEF.

The protein localises to the nucleus. In terms of biological role, transcription repressor. The chain is Zinc finger CCCH-type with G patch domain-containing protein from Drosophila simulans (Fruit fly).